The chain runs to 46 residues: Mu-segestritoxin-Sf1b (46 aa).

4 cysteine pairs are disulfide-bonded: C3-C19, C10-C22, C18-C42, and C24-C40. A keys region for toxin activity region spans residues 31 to 33; that stretch reads RPW.

It belongs to the neurotoxin 16 (SFI) family. Expressed by the venom gland.

It is found in the secreted. Its function is as follows. Insecticidal toxin. Causes flaccid paralysis followed by death when injected into Heliothis virescens larvae. Does not induce any toxic effects when injected intravenously into adult mice at a dose of 1.25 mg/kg body weight. The protein is Mu-segestritoxin-Sf1b of Segestria florentina (Tube-web spider).